The chain runs to 415 residues: tRNA(Met) cytidine acetate ligase (415 aa).

Residues Val7 to His20, Gly101, Asn162, and Arg187 to Ile188 contribute to the ATP site.

The protein belongs to the TmcAL family. As to quaternary structure, homodimer.

It localises to the cytoplasm. The enzyme catalyses cytidine(34) in elongator tRNA(Met) + acetate + ATP = N(4)-acetylcytidine(34) in elongator tRNA(Met) + AMP + diphosphate. Its function is as follows. Catalyzes the formation of N(4)-acetylcytidine (ac(4)C) at the wobble position of elongator tRNA(Met), using acetate and ATP as substrates. First activates an acetate ion to form acetyladenylate (Ac-AMP) and then transfers the acetyl group to tRNA to form ac(4)C34. This Bacillus subtilis (strain 168) protein is tRNA(Met) cytidine acetate ligase.